Here is a 1151-residue protein sequence, read N- to C-terminus: UDP-N-acetylglucosamine--peptide N-acetylglucosaminyltransferase (1151 aa).

TPR repeat units follow at residues 125-158 (LKKV…DPNN), 193-226 (AEAY…KPEF), 227-260 (IDAY…NPDL), 261-294 (YCVR…QPQF), 295-328 (AVAW…DPNF), 329-362 (LDAY…SGNH), 363-396 (AVVH…QPHF), 397-430 (PDAY…CPTH), 431-464 (ADSQ…YPEF), 465-498 (AAAH…APTF), 499-532 (ADAY…NPAF), and 533-566 (ADAH…KPDF). Residues 567–577 (PDAYCNLAHCH) form a TPR 13; truncated repeat. The short motif at 591–607 (RKLVQIVEDQLCKKRLP) is the Nuclear localization signal element. Catalysis depends on H612, which acts as the Proton acceptor. Residues Q954, K957, 1010–1013 (VAAK), 1016–1019 (HVRR), 1034–1036 (GHT), and D1040 contribute to the UDP site.

Belongs to the glycosyltransferase 41 family. O-GlcNAc transferase subfamily.

The protein localises to the nucleus. The protein resides in the cytoplasm. Its subcellular location is the perinuclear region. It catalyses the reaction L-seryl-[protein] + UDP-N-acetyl-alpha-D-glucosamine = 3-O-(N-acetyl-beta-D-glucosaminyl)-L-seryl-[protein] + UDP + H(+). The catalysed reaction is L-threonyl-[protein] + UDP-N-acetyl-alpha-D-glucosamine = 3-O-(N-acetyl-beta-D-glucosaminyl)-L-threonyl-[protein] + UDP + H(+). Its pathway is protein modification; protein glycosylation. Addition of nucleotide-activated sugars directly onto the polypeptide through O-glycosidic linkage with the hydroxyl of serine or threonine. Influences tap habituation in the mechanosensory neurons cell autonomously. The chain is UDP-N-acetylglucosamine--peptide N-acetylglucosaminyltransferase (ogt-1) from Caenorhabditis elegans.